A 382-amino-acid chain; its full sequence is Lipid-A-disaccharide synthase (382 aa).

This sequence belongs to the LpxB family.

The enzyme catalyses 2-N,3-O-bis[(3R)-3-hydroxytetradecanoyl]-alpha-D-glucosaminyl 1-phosphate + UDP-2-N,3-O-bis[(3R)-3-hydroxytetradecanoyl]-alpha-D-glucosamine = lipid A disaccharide (E. coli) + UDP + H(+). It catalyses the reaction a lipid X + a UDP-2-N,3-O-bis[(3R)-3-hydroxyacyl]-alpha-D-glucosamine = a lipid A disaccharide + UDP + H(+). Its pathway is glycolipid biosynthesis; lipid IV(A) biosynthesis; lipid IV(A) from (3R)-3-hydroxytetradecanoyl-[acyl-carrier-protein] and UDP-N-acetyl-alpha-D-glucosamine: step 5/6. Condensation of UDP-2,3-diacylglucosamine and 2,3-diacylglucosamine-1-phosphate to form lipid A disaccharide, a precursor of lipid A, a phosphorylated glycolipid that anchors the lipopolysaccharide to the outer membrane of the cell. In Escherichia coli O7:K1 (strain IAI39 / ExPEC), this protein is Lipid-A-disaccharide synthase.